The chain runs to 530 residues: Bifunctional purine biosynthesis protein PurH (530 aa).

One can recognise an MGS-like domain in the interval 1-148 (MEQARPIRRA…KNHKDVAIVV (148 aa)).

It belongs to the PurH family.

The catalysed reaction is (6R)-10-formyltetrahydrofolate + 5-amino-1-(5-phospho-beta-D-ribosyl)imidazole-4-carboxamide = 5-formamido-1-(5-phospho-D-ribosyl)imidazole-4-carboxamide + (6S)-5,6,7,8-tetrahydrofolate. It carries out the reaction IMP + H2O = 5-formamido-1-(5-phospho-D-ribosyl)imidazole-4-carboxamide. It functions in the pathway purine metabolism; IMP biosynthesis via de novo pathway; 5-formamido-1-(5-phospho-D-ribosyl)imidazole-4-carboxamide from 5-amino-1-(5-phospho-D-ribosyl)imidazole-4-carboxamide (10-formyl THF route): step 1/1. Its pathway is purine metabolism; IMP biosynthesis via de novo pathway; IMP from 5-formamido-1-(5-phospho-D-ribosyl)imidazole-4-carboxamide: step 1/1. The protein is Bifunctional purine biosynthesis protein PurH of Aeromonas hydrophila subsp. hydrophila (strain ATCC 7966 / DSM 30187 / BCRC 13018 / CCUG 14551 / JCM 1027 / KCTC 2358 / NCIMB 9240 / NCTC 8049).